The sequence spans 299 residues: DNA-binding transcriptional activator HetR (299 aa).

Serine 152 is an active-site residue.

Belongs to the peptidase S48 family. In terms of assembly, homodimer; disulfide-linked.

Its function is as follows. Might be involved in temporal and/or spatial regulation of nitrogen fixation. Dimerization is required for DNA-binding. Has both a protease and a DNA-binding activity. This chain is DNA-binding transcriptional activator HetR, found in Leptolyngbya boryana (Plectonema boryanum).